The chain runs to 145 residues: 3-dehydroquinate dehydratase (145 aa).

Y24 (proton acceptor) is an active-site residue. The substrate site is built by N75, H81, and D88. H102 functions as the Proton donor in the catalytic mechanism. Substrate contacts are provided by residues 103-104 (LS) and R113.

It belongs to the type-II 3-dehydroquinase family. In terms of assembly, homododecamer.

The catalysed reaction is 3-dehydroquinate = 3-dehydroshikimate + H2O. Its pathway is metabolic intermediate biosynthesis; chorismate biosynthesis; chorismate from D-erythrose 4-phosphate and phosphoenolpyruvate: step 3/7. Its function is as follows. Catalyzes a trans-dehydration via an enolate intermediate. The protein is 3-dehydroquinate dehydratase of Chelativorans sp. (strain BNC1).